Reading from the N-terminus, the 1058-residue chain is Carbamoyl phosphate synthase large chain (1058 aa).

Positions 1–401 (MPKRTDIQKI…SLLKACRSLE (401 aa)) are carboxyphosphate synthetic domain. Arg129, Arg169, Gly175, Gly176, Arg208, Ile210, Glu215, Gly241, Ile242, His243, Gln284, and Glu298 together coordinate ATP. Positions 133–327 (KQLMEELEQP…IAKLAAKIAV (195 aa)) constitute an ATP-grasp 1 domain. Mg(2+) contacts are provided by Gln284, Glu298, and Asn300. Gln284, Glu298, and Asn300 together coordinate Mn(2+). Residues 402–546 (IGVHHNEIPE…YSTYGWENES (145 aa)) form an oligomerization domain region. Residues 547–929 (IKSDKESVLV…ALYKAFEASY (383 aa)) are carbamoyl phosphate synthetic domain. The ATP-grasp 2 domain maps to 671 to 861 (EQALKELDIP…MAQVATKLIL (191 aa)). 10 residues coordinate ATP: Arg707, Ser746, Ile748, Glu752, Gly777, Val778, His779, Ser780, Gln820, and Glu832. 3 residues coordinate Mg(2+): Gln820, Glu832, and Asn834. Residues Gln820, Glu832, and Asn834 each coordinate Mn(2+). The 129-residue stretch at 930–1058 (LHLPTFGNVV…ESRSFVTEAI (129 aa)) folds into the MGS-like domain. The segment at 930 to 1058 (LHLPTFGNVV…ESRSFVTEAI (129 aa)) is allosteric domain.

It belongs to the CarB family. Composed of two chains; the small (or glutamine) chain promotes the hydrolysis of glutamine to ammonia, which is used by the large (or ammonia) chain to synthesize carbamoyl phosphate. Tetramer of heterodimers (alpha,beta)4. The cofactor is Mg(2+). Mn(2+) is required as a cofactor.

It catalyses the reaction hydrogencarbonate + L-glutamine + 2 ATP + H2O = carbamoyl phosphate + L-glutamate + 2 ADP + phosphate + 2 H(+). The catalysed reaction is hydrogencarbonate + NH4(+) + 2 ATP = carbamoyl phosphate + 2 ADP + phosphate + 2 H(+). The protein operates within amino-acid biosynthesis; L-arginine biosynthesis; carbamoyl phosphate from bicarbonate: step 1/1. It participates in pyrimidine metabolism; UMP biosynthesis via de novo pathway; (S)-dihydroorotate from bicarbonate: step 1/3. In terms of biological role, large subunit of the glutamine-dependent carbamoyl phosphate synthetase (CPSase). CPSase catalyzes the formation of carbamoyl phosphate from the ammonia moiety of glutamine, carbonate, and phosphate donated by ATP, constituting the first step of 2 biosynthetic pathways, one leading to arginine and/or urea and the other to pyrimidine nucleotides. The large subunit (synthetase) binds the substrates ammonia (free or transferred from glutamine from the small subunit), hydrogencarbonate and ATP and carries out an ATP-coupled ligase reaction, activating hydrogencarbonate by forming carboxy phosphate which reacts with ammonia to form carbamoyl phosphate. In Streptococcus pneumoniae (strain ATCC 700669 / Spain 23F-1), this protein is Carbamoyl phosphate synthase large chain.